The following is a 72-amino-acid chain: Small ribosomal subunit protein bS20 (72 aa).

The protein belongs to the bacterial ribosomal protein bS20 family.

Functionally, binds directly to 16S ribosomal RNA. The protein is Small ribosomal subunit protein bS20 (rpsT) of Aeromonas salmonicida.